A 263-amino-acid chain; its full sequence is Endonuclease 8 (263 aa).

Pro2 (schiff-base intermediate with DNA) is an active-site residue. Glu3 (proton donor) is an active-site residue. The active-site Proton donor; for beta-elimination activity is Lys53. DNA-binding residues include Gln70, Arg125, and Asn169. Residues 229-263 (KVFHRDGELCERCGGIIEKTTLSSRPFYWCPGCQH) form an FPG-type zinc finger. Arg253 (proton donor; for delta-elimination activity) is an active-site residue.

It belongs to the FPG family. Zn(2+) serves as cofactor.

The enzyme catalyses 2'-deoxyribonucleotide-(2'-deoxyribose 5'-phosphate)-2'-deoxyribonucleotide-DNA = a 3'-end 2'-deoxyribonucleotide-(2,3-dehydro-2,3-deoxyribose 5'-phosphate)-DNA + a 5'-end 5'-phospho-2'-deoxyribonucleoside-DNA + H(+). Its function is as follows. Involved in base excision repair of DNA damaged by oxidation or by mutagenic agents. Acts as a DNA glycosylase that recognizes and removes damaged bases. Has a preference for oxidized pyrimidines, such as thymine glycol, 5,6-dihydrouracil and 5,6-dihydrothymine. Has AP (apurinic/apyrimidinic) lyase activity and introduces nicks in the DNA strand. Cleaves the DNA backbone by beta-delta elimination to generate a single-strand break at the site of the removed base with both 3'- and 5'-phosphates. This is Endonuclease 8 from Shigella dysenteriae serotype 1 (strain Sd197).